The following is a 354-amino-acid chain: Probable glucan endo-1,3-beta-glucosidase BG5 (354 aa).

Residues 1-30 form the signal peptide; sequence MLYLPKKLFLFFFSCIVVIVNYNNSDFVNA. The Proton donor role is filled by Glu-137. Residue Glu-276 is the Nucleophile of the active site. Asn-286 carries an N-linked (GlcNAc...) asparagine glycan.

It belongs to the glycosyl hydrolase 17 family.

Its subcellular location is the secreted. The catalysed reaction is Hydrolysis of (1-&gt;3)-beta-D-glucosidic linkages in (1-&gt;3)-beta-D-glucans.. Functionally, may play a role in plant defense against pathogens. The chain is Probable glucan endo-1,3-beta-glucosidase BG5 from Arabidopsis thaliana (Mouse-ear cress).